The chain runs to 146 residues: Snaclec coagulation factor IX/factor X-binding protein subunit B (146 aa).

An N-terminal signal peptide occupies residues 1 to 23 (MGRFIFMSFGFLVVFLSLSGTAA). In terms of domain architecture, C-type lectin spans 24 to 146 (DCPSDWSSYE…MAQFVCEFQA (123 aa)). 3 disulfide bridges follow: C25–C36, C53–C142, and C119–C134. S64, Q66, and E70 together coordinate Ca(2+). E143 contacts Ca(2+).

Belongs to the snaclec family. In terms of assembly, heterodimer with subunit A of IX/X-bp or IX-bp; disulfide-linked. As to expression, expressed by the venom gland.

It localises to the secreted. In terms of biological role, when linked to subunit A of IX/X-bp, anticoagulant protein which binds to the gamma-carboxyglutamic acid-domain regions of factors IX (F9) and factor X (10) in the presence of calcium with a 1 to 1 stoichiometry. Its function is as follows. When linked to subunit A of IX-bp, anticoagulant protein which binds to the gamma-carboxyglutamic acid-domain regions of factor IX (but not to factor X) in the presence of calcium with a 1 to 1 stoichiometry. This Protobothrops flavoviridis (Habu) protein is Snaclec coagulation factor IX/factor X-binding protein subunit B.